A 150-amino-acid chain; its full sequence is 3-dehydroquinate dehydratase (150 aa).

Y25 functions as the Proton acceptor in the catalytic mechanism. The substrate site is built by N76, H82, and D89. Catalysis depends on H102, which acts as the Proton donor. Residues 103–104 and R113 contribute to the substrate site; that span reads LS.

The protein belongs to the type-II 3-dehydroquinase family. Homododecamer.

It catalyses the reaction 3-dehydroquinate = 3-dehydroshikimate + H2O. The protein operates within metabolic intermediate biosynthesis; chorismate biosynthesis; chorismate from D-erythrose 4-phosphate and phosphoenolpyruvate: step 3/7. In terms of biological role, catalyzes a trans-dehydration via an enolate intermediate. This is 3-dehydroquinate dehydratase from Trichodesmium erythraeum (strain IMS101).